The sequence spans 437 residues: Ribosomal protein uS12 methylthiotransferase RimO (437 aa).

Positions 9–124 constitute an MTTase N-terminal domain; sequence TKVNIVTLGC…LPAILKKFRA (116 aa). 6 residues coordinate [4Fe-4S] cluster: C18, C56, C90, C151, C155, and C158. One can recognise a Radical SAM core domain in the interval 137–367; sequence TTPSHYAYVK…MSIQEGISAE (231 aa). Residues 370-437 enclose the TRAM domain; it reads EKKIGNTYKV…EFDLFGEIVK (68 aa).

This sequence belongs to the methylthiotransferase family. RimO subfamily. It depends on [4Fe-4S] cluster as a cofactor.

The protein resides in the cytoplasm. The enzyme catalyses L-aspartate(89)-[ribosomal protein uS12]-hydrogen + (sulfur carrier)-SH + AH2 + 2 S-adenosyl-L-methionine = 3-methylsulfanyl-L-aspartate(89)-[ribosomal protein uS12]-hydrogen + (sulfur carrier)-H + 5'-deoxyadenosine + L-methionine + A + S-adenosyl-L-homocysteine + 2 H(+). Functionally, catalyzes the methylthiolation of an aspartic acid residue of ribosomal protein uS12. In Cytophaga hutchinsonii (strain ATCC 33406 / DSM 1761 / CIP 103989 / NBRC 15051 / NCIMB 9469 / D465), this protein is Ribosomal protein uS12 methylthiotransferase RimO.